The chain runs to 200 residues: Large ribosomal subunit protein uL4 (200 aa).

The segment at 42-65 (TRAQKTRSEVSGGGAKPWRQKGTG) is disordered.

The protein belongs to the universal ribosomal protein uL4 family. As to quaternary structure, part of the 50S ribosomal subunit.

One of the primary rRNA binding proteins, this protein initially binds near the 5'-end of the 23S rRNA. It is important during the early stages of 50S assembly. It makes multiple contacts with different domains of the 23S rRNA in the assembled 50S subunit and ribosome. Functionally, forms part of the polypeptide exit tunnel. This Vibrio vulnificus (strain CMCP6) protein is Large ribosomal subunit protein uL4.